Here is a 124-residue protein sequence, read N- to C-terminus: Large ribosomal subunit protein bL12 (124 aa).

Belongs to the bacterial ribosomal protein bL12 family. Homodimer. Part of the ribosomal stalk of the 50S ribosomal subunit. Forms a multimeric L10(L12)X complex, where L10 forms an elongated spine to which 2 to 4 L12 dimers bind in a sequential fashion. Binds GTP-bound translation factors.

In terms of biological role, forms part of the ribosomal stalk which helps the ribosome interact with GTP-bound translation factors. Is thus essential for accurate translation. The sequence is that of Large ribosomal subunit protein bL12 from Liberibacter africanus subsp. capensis.